The chain runs to 63 residues: Cytochrome c oxidase subunit 7C, mitochondrial (63 aa).

The transit peptide at 1–16 (MLGHSIRRFTTSVVRR) directs the protein to the mitochondrion. Residues 17-33 (SHYEEGPGKNLPFSVKN) lie on the Mitochondrial matrix side of the membrane. Lysine 25 is subject to N6-acetyllysine; alternate. Lysine 25 carries the post-translational modification N6-succinyllysine; alternate. Residues 34 to 60 (KWALLVKMSLYFGSAFATPFLIVRHQL) traverse the membrane as a helical segment. Residues 61-63 (LKQ) are Mitochondrial intermembrane-facing.

Belongs to the cytochrome c oxidase VIIc family. In terms of assembly, component of the cytochrome c oxidase (complex IV, CIV), a multisubunit enzyme composed of 14 subunits. The complex is composed of a catalytic core of 3 subunits MT-CO1, MT-CO2 and MT-CO3, encoded in the mitochondrial DNA, and 11 supernumerary subunits COX4I, COX5A, COX5B, COX6A, COX6B, COX6C, COX7A, COX7B, COX7C, COX8 and NDUFA4, which are encoded in the nuclear genome. The complex exists as a monomer or a dimer and forms supercomplexes (SCs) in the inner mitochondrial membrane with NADH-ubiquinone oxidoreductase (complex I, CI) and ubiquinol-cytochrome c oxidoreductase (cytochrome b-c1 complex, complex III, CIII), resulting in different assemblies (supercomplex SCI(1)III(2)IV(1) and megacomplex MCI(2)III(2)IV(2)). Interacts with RAB5IF.

Its subcellular location is the mitochondrion inner membrane. It functions in the pathway energy metabolism; oxidative phosphorylation. Component of the cytochrome c oxidase, the last enzyme in the mitochondrial electron transport chain which drives oxidative phosphorylation. The respiratory chain contains 3 multisubunit complexes succinate dehydrogenase (complex II, CII), ubiquinol-cytochrome c oxidoreductase (cytochrome b-c1 complex, complex III, CIII) and cytochrome c oxidase (complex IV, CIV), that cooperate to transfer electrons derived from NADH and succinate to molecular oxygen, creating an electrochemical gradient over the inner membrane that drives transmembrane transport and the ATP synthase. Cytochrome c oxidase is the component of the respiratory chain that catalyzes the reduction of oxygen to water. Electrons originating from reduced cytochrome c in the intermembrane space (IMS) are transferred via the dinuclear copper A center (CU(A)) of subunit 2 and heme A of subunit 1 to the active site in subunit 1, a binuclear center (BNC) formed by heme A3 and copper B (CU(B)). The BNC reduces molecular oxygen to 2 water molecules using 4 electrons from cytochrome c in the IMS and 4 protons from the mitochondrial matrix. The chain is Cytochrome c oxidase subunit 7C, mitochondrial (COX7C) from Papio hamadryas (Hamadryas baboon).